Here is a 249-residue protein sequence, read N- to C-terminus: 5'-nucleotidase SurE (249 aa).

A divalent metal cation contacts are provided by D8, D9, S39, and N91.

It belongs to the SurE nucleotidase family. It depends on a divalent metal cation as a cofactor.

The protein localises to the cytoplasm. The enzyme catalyses a ribonucleoside 5'-phosphate + H2O = a ribonucleoside + phosphate. Functionally, nucleotidase that shows phosphatase activity on nucleoside 5'-monophosphates. The polypeptide is 5'-nucleotidase SurE (Pseudomonas paraeruginosa (strain DSM 24068 / PA7) (Pseudomonas aeruginosa (strain PA7))).